Reading from the N-terminus, the 136-residue chain is MRGHSALMMAVVTLAAVSSGAAEVANTAAVSSDYLIGTILTFAESDRLLRVNDVDDVPVYHYPPEKGKRTTFFEDRMKKKLANPEKIRRLYWKWYSMGYSAREVVQHLDQTDNRELKEIYHNLGVGYAEFVAKMNV.

The signal sequence occupies residues 1–22 (MRGHSALMMAVVTLAAVSSGAA). Positions 47–50 (RLLR) match the RxLR motif.

It belongs to the RxLR effector family.

It is found in the secreted. Its subcellular location is the host nucleus. It localises to the host cytoplasm. In terms of biological role, effector that completely suppresses the host cell death induced by cell death-inducing proteins. The chain is Secreted RxLR effector protein 15 from Plasmopara viticola (Downy mildew of grapevine).